A 349-amino-acid polypeptide reads, in one-letter code: 4-hydroxythreonine-4-phosphate dehydrogenase (349 aa).

Substrate contacts are provided by His141 and Thr142. A divalent metal cation-binding residues include His176, His221, and His276. Positions 284, 293, and 302 each coordinate substrate.

This sequence belongs to the PdxA family. In terms of assembly, homodimer. Requires Zn(2+) as cofactor. The cofactor is Mg(2+). It depends on Co(2+) as a cofactor.

It localises to the cytoplasm. The catalysed reaction is 4-(phosphooxy)-L-threonine + NAD(+) = 3-amino-2-oxopropyl phosphate + CO2 + NADH. It functions in the pathway cofactor biosynthesis; pyridoxine 5'-phosphate biosynthesis; pyridoxine 5'-phosphate from D-erythrose 4-phosphate: step 4/5. In terms of biological role, catalyzes the NAD(P)-dependent oxidation of 4-(phosphooxy)-L-threonine (HTP) into 2-amino-3-oxo-4-(phosphooxy)butyric acid which spontaneously decarboxylates to form 3-amino-2-oxopropyl phosphate (AHAP). This chain is 4-hydroxythreonine-4-phosphate dehydrogenase, found in Methylorubrum extorquens (strain PA1) (Methylobacterium extorquens).